The sequence spans 49 residues: Large ribosomal subunit protein bL33A (49 aa).

The disordered stretch occupies residues 20–49 (KKNKRNNPDRVEFKKYCPRDKKSTLHRETK). Basic and acidic residues predominate over residues 25 to 49 (NNPDRVEFKKYCPRDKKSTLHRETK).

Belongs to the bacterial ribosomal protein bL33 family. As to quaternary structure, part of the 50S ribosomal subunit. Interacts with VmlR.

The chain is Large ribosomal subunit protein bL33A (rpmGA) from Bacillus subtilis (strain 168).